A 462-amino-acid chain; its full sequence is uncharacterized protein (462 aa).

This sequence belongs to the IIV-6 329R family.

This is an uncharacterized protein from Aedes vexans (Inland floodwater mosquito).